A 166-amino-acid chain; its full sequence is Large ribosomal subunit protein mL49 (166 aa).

The tract at residues 56-78 is disordered; the sequence is RIPDPPKHEHYPTPSGWQPPRDP.

It belongs to the mitochondrion-specific ribosomal protein mL49 family. Component of the mitochondrial large ribosomal subunit (mt-LSU). Mature mammalian 55S mitochondrial ribosomes consist of a small (28S) and a large (39S) subunit. The 28S small subunit contains a 12S ribosomal RNA (12S mt-rRNA) and 30 different proteins. The 39S large subunit contains a 16S rRNA (16S mt-rRNA), a copy of mitochondrial valine transfer RNA (mt-tRNA(Val)), which plays an integral structural role, and 52 different proteins. Interacts with OXA1L. In terms of tissue distribution, ubiquitous.

The protein resides in the mitochondrion. In Homo sapiens (Human), this protein is Large ribosomal subunit protein mL49 (MRPL49).